The following is a 150-amino-acid chain: SsrA-binding protein (150 aa).

It belongs to the SmpB family.

Its subcellular location is the cytoplasm. Its function is as follows. Required for rescue of stalled ribosomes mediated by trans-translation. Binds to transfer-messenger RNA (tmRNA), required for stable association of tmRNA with ribosomes. tmRNA and SmpB together mimic tRNA shape, replacing the anticodon stem-loop with SmpB. tmRNA is encoded by the ssrA gene; the 2 termini fold to resemble tRNA(Ala) and it encodes a 'tag peptide', a short internal open reading frame. During trans-translation Ala-aminoacylated tmRNA acts like a tRNA, entering the A-site of stalled ribosomes, displacing the stalled mRNA. The ribosome then switches to translate the ORF on the tmRNA; the nascent peptide is terminated with the 'tag peptide' encoded by the tmRNA and targeted for degradation. The ribosome is freed to recommence translation, which seems to be the essential function of trans-translation. In Coprothermobacter proteolyticus (strain ATCC 35245 / DSM 5265 / OCM 4 / BT), this protein is SsrA-binding protein.